The following is a 278-amino-acid chain: Large ribosomal subunit protein uL2 (278 aa).

Disordered regions lie at residues 1–58 (MAIR…GGGH) and 225–278 (VMNP…KNKR). Residues 37 to 58 (LHGRGGRNAHGRITTRHKGGGH) show a composition bias toward basic residues. Basic and acidic residues predominate over residues 253-267 (PEGRTRKNKASDKLI). Residues 268–278 (VRRRRTGKNKR) show a composition bias toward basic residues.

This sequence belongs to the universal ribosomal protein uL2 family. In terms of assembly, part of the 50S ribosomal subunit. Forms a bridge to the 30S subunit in the 70S ribosome.

Functionally, one of the primary rRNA binding proteins. Required for association of the 30S and 50S subunits to form the 70S ribosome, for tRNA binding and peptide bond formation. It has been suggested to have peptidyltransferase activity; this is somewhat controversial. Makes several contacts with the 16S rRNA in the 70S ribosome. The chain is Large ribosomal subunit protein uL2 from Rhodococcus opacus (strain B4).